Reading from the N-terminus, the 314-residue chain is Serine hydrolase-like protein 2 (314 aa).

In terms of domain architecture, AB hydrolase-1 spans 33 to 293 (PPVLCLHGWL…GNHCVHMSEP (261 aa)). Residue serine 108 is part of the active site.

The protein belongs to the AB hydrolase superfamily.

The protein resides in the cytoplasm. The protein localises to the perinuclear region. It localises to the peroxisome. Its function is as follows. Probable serine hydrolase. May be related to cell muscle hypertrophy. The sequence is that of Serine hydrolase-like protein 2 (SERHL2) from Homo sapiens (Human).